The chain runs to 71 residues: MFFTAILKSFKQAFIFKYKMTIFKSGHLVEALSSCPFSGHYDGFTKIYKGKKISTIKTPFIGSVILEYGNK.

This is an uncharacterized protein from Acheta domesticus (House cricket).